The primary structure comprises 99 residues: Large ribosomal subunit protein uL23 (99 aa).

The protein belongs to the universal ribosomal protein uL23 family. As to quaternary structure, part of the 50S ribosomal subunit. Contacts protein L29, and trigger factor when it is bound to the ribosome.

One of the early assembly proteins it binds 23S rRNA. One of the proteins that surrounds the polypeptide exit tunnel on the outside of the ribosome. Forms the main docking site for trigger factor binding to the ribosome. The chain is Large ribosomal subunit protein uL23 from Haemophilus influenzae (strain 86-028NP).